The following is a 190-amino-acid chain: Holliday junction branch migration complex subunit RuvA (190 aa).

Residues 1–64 (MIGKLSGTLD…EDAQILYGFA (64 aa)) are domain I. Positions 65–137 (TSQERAAFRE…LKGKLGPDIG (73 aa)) are domain II. Residues 137–141 (GVAAS) are flexible linker. Residues 142–190 (VANDSQADILQALLALGYSDKEAAAALKALPSDVGVSEGIRLALRALGK) are domain III.

It belongs to the RuvA family. Homotetramer. Forms an RuvA(8)-RuvB(12)-Holliday junction (HJ) complex. HJ DNA is sandwiched between 2 RuvA tetramers; dsDNA enters through RuvA and exits via RuvB. An RuvB hexamer assembles on each DNA strand where it exits the tetramer. Each RuvB hexamer is contacted by two RuvA subunits (via domain III) on 2 adjacent RuvB subunits; this complex drives branch migration. In the full resolvosome a probable DNA-RuvA(4)-RuvB(12)-RuvC(2) complex forms which resolves the HJ.

It is found in the cytoplasm. Functionally, the RuvA-RuvB-RuvC complex processes Holliday junction (HJ) DNA during genetic recombination and DNA repair, while the RuvA-RuvB complex plays an important role in the rescue of blocked DNA replication forks via replication fork reversal (RFR). RuvA specifically binds to HJ cruciform DNA, conferring on it an open structure. The RuvB hexamer acts as an ATP-dependent pump, pulling dsDNA into and through the RuvAB complex. HJ branch migration allows RuvC to scan DNA until it finds its consensus sequence, where it cleaves and resolves the cruciform DNA. This is Holliday junction branch migration complex subunit RuvA from Albidiferax ferrireducens (strain ATCC BAA-621 / DSM 15236 / T118) (Rhodoferax ferrireducens).